The following is a 406-amino-acid chain: Imidazolonepropionase (406 aa).

Histidine 72 and histidine 74 together coordinate Fe(3+). Histidine 72 and histidine 74 together coordinate Zn(2+). The 4-imidazolone-5-propanoate site is built by arginine 81, tyrosine 144, and histidine 177. Residue tyrosine 144 participates in N-formimidoyl-L-glutamate binding. Residue histidine 242 participates in Fe(3+) binding. Histidine 242 lines the Zn(2+) pocket. Glutamine 245 is a binding site for 4-imidazolone-5-propanoate. Aspartate 317 is a binding site for Fe(3+). Aspartate 317 serves as a coordination point for Zn(2+). N-formimidoyl-L-glutamate contacts are provided by asparagine 319 and glycine 321. Threonine 322 serves as a coordination point for 4-imidazolone-5-propanoate.

It belongs to the metallo-dependent hydrolases superfamily. HutI family. Requires Zn(2+) as cofactor. Fe(3+) serves as cofactor.

It is found in the cytoplasm. It catalyses the reaction 4-imidazolone-5-propanoate + H2O = N-formimidoyl-L-glutamate. The protein operates within amino-acid degradation; L-histidine degradation into L-glutamate; N-formimidoyl-L-glutamate from L-histidine: step 3/3. Functionally, catalyzes the hydrolytic cleavage of the carbon-nitrogen bond in imidazolone-5-propanoate to yield N-formimidoyl-L-glutamate. It is the third step in the universal histidine degradation pathway. The polypeptide is Imidazolonepropionase (Yersinia pestis bv. Antiqua (strain Antiqua)).